The following is a 97-amino-acid chain: Aspartyl/glutamyl-tRNA(Asn/Gln) amidotransferase subunit C (97 aa).

This sequence belongs to the GatC family. As to quaternary structure, heterotrimer of A, B and C subunits.

It carries out the reaction L-glutamyl-tRNA(Gln) + L-glutamine + ATP + H2O = L-glutaminyl-tRNA(Gln) + L-glutamate + ADP + phosphate + H(+). The catalysed reaction is L-aspartyl-tRNA(Asn) + L-glutamine + ATP + H2O = L-asparaginyl-tRNA(Asn) + L-glutamate + ADP + phosphate + 2 H(+). Its function is as follows. Allows the formation of correctly charged Asn-tRNA(Asn) or Gln-tRNA(Gln) through the transamidation of misacylated Asp-tRNA(Asn) or Glu-tRNA(Gln) in organisms which lack either or both of asparaginyl-tRNA or glutaminyl-tRNA synthetases. The reaction takes place in the presence of glutamine and ATP through an activated phospho-Asp-tRNA(Asn) or phospho-Glu-tRNA(Gln). The polypeptide is Aspartyl/glutamyl-tRNA(Asn/Gln) amidotransferase subunit C (Synechococcus sp. (strain CC9605)).